A 642-amino-acid polypeptide reads, in one-letter code: Extracellular metalloproteinase 5 (642 aa).

Residues 1–19 form the signal peptide; sequence MHGLLLAAGLLSLPLHVLA. A propeptide spanning residues 20–246 is cleaved from the precursor; it reads HPQPSTTTSL…VHNVVDYVAH (227 aa). N-linked (GlcNAc...) asparagine glycosylation is present at N287. H430 provides a ligand contact to Zn(2+). E431 is an active-site residue. H434 serves as a coordination point for Zn(2+). N595 and N624 each carry an N-linked (GlcNAc...) asparagine glycan.

It belongs to the peptidase M36 family. Zn(2+) serves as cofactor.

It localises to the secreted. Its function is as follows. Secreted metalloproteinase that allows assimilation of proteinaceous substrates and probably acts as a virulence factor. The protein is Extracellular metalloproteinase 5 (MEP5) of Arthroderma gypseum (strain ATCC MYA-4604 / CBS 118893) (Microsporum gypseum).